We begin with the raw amino-acid sequence, 449 residues long: Hyaluronidase-2 (449 aa).

Residues 1–23 (MYHLWIKCLAAWIFLKRCNGVHA) form the signal peptide. 2 disulfide bridges follow: Cys-47–Cys-340 and Cys-211–Cys-227. N-linked (GlcNAc...) asparagine glycosylation is found at Asn-67, Asn-103, and Asn-111. Glu-135 functions as the Proton donor in the catalytic mechanism. The N-linked (GlcNAc...) asparagine glycan is linked to Asn-153. Asn-357 carries N-linked (GlcNAc...) asparagine glycosylation. Disulfide bonds link Cys-365–Cys-376, Cys-370–Cys-427, and Cys-429–Cys-438. The N-linked (GlcNAc...) asparagine glycan is linked to Asn-401. The EGF-like domain occupies 427-438 (CQCYQGWKGLYC).

The protein belongs to the glycosyl hydrolase 56 family. In terms of assembly, monomer. As to expression, expressed by the venom gland.

The protein localises to the secreted. The catalysed reaction is Random hydrolysis of (1-&gt;4)-linkages between N-acetyl-beta-D-glucosamine and D-glucuronate residues in hyaluronate.. Snake venom endo-hyaluronidase that degrades hyaluronan to smaller oligosaccharide fragments. In venom, it is not toxic by itself, but increases the diffusion of other venom proteins by degrading the extracellular matrix. In addition, it displays antiedematogenic activity. This Bitis arietans (African puff adder) protein is Hyaluronidase-2.